We begin with the raw amino-acid sequence, 373 residues long: Peroxisomal biogenesis factor 3 (373 aa).

Residues 1-15 (MLRSVWNFLKRHKKK) are Cytoplasmic-facing. The targeting to peroxisomes stretch occupies residues 1 to 45 (MLRSVWNFLKRHKKKCIFLGTVLGGVYILGKYGQKKIREIQEREA). A helical transmembrane segment spans residues 16-36 (CIFLGTVLGGVYILGKYGQKK). Residues 37–116 (IREIQEREAA…LKIISFTRST (80 aa)) are Peroxisomal-facing. A helical transmembrane segment spans residues 117–140 (VAVYSTCMLVVLLRVQLNIIGGYI). The segment at 120-136 (YSTCMLVVLLRVQLNII) is interaction with PEX19. Over 141–373 (YLDNAAVGKN…AFSTPQQLEK (233 aa)) the chain is Cytoplasmic.

This sequence belongs to the peroxin-3 family. Interacts with PEX19. Found in all examined tissues.

The protein localises to the peroxisome membrane. Involved in peroxisome biosynthesis and integrity. Assembles membrane vesicles before the matrix proteins are translocated. As a docking factor for PEX19, is necessary for the import of peroxisomal membrane proteins in the peroxisomes. This Homo sapiens (Human) protein is Peroxisomal biogenesis factor 3 (PEX3).